A 351-amino-acid chain; its full sequence is Alcohol dehydrogenase 2 (351 aa).

Residues C47, H70, C101, C104, C107, C115, and C157 each contribute to the Zn(2+) site. Residues 181 to 187, D205, K209, 271 to 273, and R343 contribute to the NAD(+) site; these read GAGGGLG and VGL.

Belongs to the zinc-containing alcohol dehydrogenase family. As to quaternary structure, homotetramer. Zn(2+) serves as cofactor.

It carries out the reaction a primary alcohol + NAD(+) = an aldehyde + NADH + H(+). The catalysed reaction is a secondary alcohol + NAD(+) = a ketone + NADH + H(+). The protein is Alcohol dehydrogenase 2 (sodh-2) of Caenorhabditis elegans.